Reading from the N-terminus, the 86-residue chain is MLLFQILCRIASCNYTIRPTRDEASFNYAILNIALHTVKEKICTKEYGFKSLINKNFPKIFVWPSEKTGNAHPLGFRPECLYYYIK.

This is an uncharacterized protein from Saccharomyces cerevisiae (strain ATCC 204508 / S288c) (Baker's yeast).